Here is a 315-residue protein sequence, read N- to C-terminus: Glycine--tRNA ligase alpha subunit (315 aa).

It belongs to the class-II aminoacyl-tRNA synthetase family. Tetramer of two alpha and two beta subunits.

The protein localises to the cytoplasm. The catalysed reaction is tRNA(Gly) + glycine + ATP = glycyl-tRNA(Gly) + AMP + diphosphate. The chain is Glycine--tRNA ligase alpha subunit from Pseudomonas paraeruginosa (strain DSM 24068 / PA7) (Pseudomonas aeruginosa (strain PA7)).